A 270-amino-acid chain; its full sequence is Nuclear receptor-interacting protein 2 (270 aa).

The span at 1–27 (MSTGQEARRDEGDSRKEQEASLRDRAH) shows a compositional bias: basic and acidic residues. The tract at residues 1-33 (MSTGQEARRDEGDSRKEQEASLRDRAHLSQQRQ) is disordered. An interaction with NR1F2 region spans residues 61-99 (KDLQPHSVIQRRLVEGNQRRLQGESPLLQALIRGHDSSR). An LXXLL motif motif is present at residues 192–196 (LQTLL).

As to quaternary structure, interacts with NR1F2, RARA and THRB in a ligand-dependent manner. As to expression, expression is restricted to the central nervous system (neurons in the dentate gyrus of the hippocampus, the amygdala, thalamic and hypothalamic regions).

It is found in the nucleus. In terms of biological role, down-regulates transcriptional activation by nuclear receptors, such as NR1F2. This chain is Nuclear receptor-interacting protein 2 (Nrip2), found in Mus musculus (Mouse).